The sequence spans 557 residues: Mercuric reductase (557 aa).

Residues 1 to 65 (MILLSIEGMT…AIEALGYIAK (65 aa)) form the HMA domain. Residues cysteine 11 and cysteine 14 each contribute to the a metal cation site. The FAD site is built by alanine 106 and alanine 126. A disulfide bridge links cysteine 133 with cysteine 138. Residues lysine 142, alanine 207, aspartate 399, and valine 407 each coordinate FAD. The Hg(2+) site is built by cysteine 554 and cysteine 555.

This sequence belongs to the class-I pyridine nucleotide-disulfide oxidoreductase family. In terms of assembly, homodimer. FAD serves as cofactor.

The enzyme catalyses Hg + NADP(+) + H(+) = Hg(2+) + NADPH. Resistance to Hg(2+) in bacteria appears to be governed by a specialized system which includes mercuric reductase. MerA protein is responsible for volatilizing mercury as Hg(0). This Shewanella putrefaciens (Pseudomonas putrefaciens) protein is Mercuric reductase (merA).